The chain runs to 335 residues: tRNA N6-adenosine threonylcarbamoyltransferase (335 aa).

Positions 109, 113, and 130 each coordinate a divalent metal cation. Substrate-binding positions include 130-134 (YVSGG), Asp-162, Gly-177, Glu-181, and Asn-266. Residue Asp-294 participates in a divalent metal cation binding.

Belongs to the KAE1 / TsaD family. As to quaternary structure, component of the EKC/KEOPS complex composed of at least GON7, TP53RK, TPRKB, OSGEP and LAGE3; the whole complex dimerizes. It depends on a divalent metal cation as a cofactor. In terms of tissue distribution, widely expressed at low level. Expressed at intermediate level in lung. Weakly expressed in testis, skeletal muscle, kidney, liver, spleen, brain and heart.

Its subcellular location is the cytoplasm. The protein localises to the nucleus. It carries out the reaction L-threonylcarbamoyladenylate + adenosine(37) in tRNA = N(6)-L-threonylcarbamoyladenosine(37) in tRNA + AMP + H(+). In terms of biological role, component of the EKC/KEOPS complex that is required for the formation of a threonylcarbamoyl group on adenosine at position 37 (t(6)A37) in tRNAs that read codons beginning with adenine. The complex is probably involved in the transfer of the threonylcarbamoyl moiety of threonylcarbamoyl-AMP (TC-AMP) to the N6 group of A37. OSGEP likely plays a direct catalytic role in this reaction, but requires other protein(s) of the complex to fulfill this activity. The chain is tRNA N6-adenosine threonylcarbamoyltransferase (Osgep) from Mus musculus (Mouse).